The following is a 478-amino-acid chain: Cytochrome c-552 (478 aa).

An N-terminal signal peptide occupies residues Met-1–Ala-26. Residue His-94 coordinates heme c. Cys-122, Cys-125, and Lys-126 together coordinate heme. The heme c site is built by Cys-160, Cys-163, His-164, Cys-209, Cys-212, and His-213. Glu-215, Tyr-216, Lys-261, and Gln-263 together coordinate Ca(2+). Tyr-216 serves as a coordination point for substrate. His-264 contributes to the substrate binding site. Residues His-275, Cys-282, Cys-285, His-286, His-301, Cys-314, Cys-317, His-318, and His-393 each coordinate heme c.

This sequence belongs to the cytochrome c-552 family. Requires Ca(2+) as cofactor. Heme c serves as cofactor.

Its subcellular location is the periplasm. It carries out the reaction 6 Fe(III)-[cytochrome c] + NH4(+) + 2 H2O = 6 Fe(II)-[cytochrome c] + nitrite + 8 H(+). It participates in nitrogen metabolism; nitrate reduction (assimilation). Functionally, catalyzes the reduction of nitrite to ammonia, consuming six electrons in the process. The polypeptide is Cytochrome c-552 (Escherichia coli O17:K52:H18 (strain UMN026 / ExPEC)).